The chain runs to 365 residues: MKKTALSAWHEAAGAKMIDFGGFLMPVQYTGIIAEHKAVREAAGLFDVSHMGNFYVRGARALEFLQYMTTNDLAKIVDGQAQYTLMLYPDGGIVDDLIIYRVSADTFFLIVNASNCEKDFDWLSSHIGQFEGVALENHTSELSLIALQGPKSFDILARVFPGAGIDKLGSFHFIKLPFEGAEIMVARTGYTGEAGVEICLPNERAVALWSALMEAGKSDGIQPIGLGARDTLRLEMGYSLYGHEIERDVNPLEARLKWVVKLNKPNFIGKQACEQVEINPRKSVVGFSLEGRAIPRQHFKVYNSDKQEIGEVCSGTVSPTLQEPIGTASLLLDYAQPGTPIFVEIRGTMQPGAVRRLPFVHADRP.

Belongs to the GcvT family. In terms of assembly, the glycine cleavage system is composed of four proteins: P, T, L and H.

The catalysed reaction is N(6)-[(R)-S(8)-aminomethyldihydrolipoyl]-L-lysyl-[protein] + (6S)-5,6,7,8-tetrahydrofolate = N(6)-[(R)-dihydrolipoyl]-L-lysyl-[protein] + (6R)-5,10-methylene-5,6,7,8-tetrahydrofolate + NH4(+). The glycine cleavage system catalyzes the degradation of glycine. The chain is Aminomethyltransferase from Chlorobaculum tepidum (strain ATCC 49652 / DSM 12025 / NBRC 103806 / TLS) (Chlorobium tepidum).